Here is a 398-residue protein sequence, read N- to C-terminus: MKRKICKALICAALATSLWAGASTKVYAWDGKIDGTGTHAMIVTQGVSILENDLSKNEPESVRKNLEILKENMHELQLGSTYPDYDKNAYDLYQDHFWDPDTDNNFSKDNSWYLAYSIPDTGESQIRKFSALARYEWQRGNYKQATFYLGEAMHYFGDIDTPYHPANVTAVDSAGHVKFETFAEERKEQYKINTAGCKTNEAFYTDILKNKDFNAWSKEYARGFAKTGKSIYYSHASMSHSWDDWDYAAKVTLANSQKGTAGYIYRFLHDVSEGNDPSVGKNVKELVAYISTSGEKDAGTDDYMYFGIKTKDGKTQEWEMDNPGNDFMTGSKDTYTFKLKDENLKIDDIQNMWIRKRKYTAFSDAYKPENIKIIANGKVVVDKDINEWISGNSTYNIK.

An N-terminal signal peptide occupies residues 1–28; that stretch reads MKRKICKALICAALATSLWAGASTKVYA. Positions 29, 39, 84, 96, 154, 158, 164, 176, and 180 each coordinate Zn(2+). The 250-residue stretch at 29-278 folds into the Zn-dependent PLC domain; the sequence is WDGKIDGTGT…HDVSEGNDPS (250 aa). A linker region spans residues 275 to 283; that stretch reads NDPSVGKNV. Residues 284-398 form the PLAT domain; it reads KELVAYISTS…ISGNSTYNIK (115 aa). Ca(2+)-binding residues include aspartate 297, glycine 299, threonine 300, aspartate 301, aspartate 321, asparagine 322, glycine 324, asparagine 325, aspartate 326, aspartate 364, and alanine 365.

It belongs to the bacterial zinc-metallophospholipase C family. Requires Ca(2+) as cofactor. Zn(2+) serves as cofactor.

It is found in the secreted. The catalysed reaction is a 1,2-diacyl-sn-glycero-3-phosphocholine + H2O = phosphocholine + a 1,2-diacyl-sn-glycerol + H(+). In terms of biological role, bacterial hemolysins are exotoxins that attack blood cell membranes and cause cell rupture. Constitutes an essential virulence factor in gas gangrene. Binds to eukaryotic membranes where it hydrolyzes both phosphatidylcholine and sphingomyelin. The diacylglycerol produced can activate both the arachidonic acid pathway, leading to modulation of the inflammatory response cascade and thrombosis, and protein kinase C, leading to activation of eukaryotic phospholipases and further membrane damage. Acts on human and mouse erythrocytes, but not on rabbit or horse erythrocytes. This chain is Phospholipase C (plc), found in Clostridium perfringens (strain ATCC 13124 / DSM 756 / JCM 1290 / NCIMB 6125 / NCTC 8237 / Type A).